Here is a 510-residue protein sequence, read N- to C-terminus: Chromosomal replication initiator protein DnaA (510 aa).

A domain I, interacts with DnaA modulators region spans residues 1–87; the sequence is MSVELWQQCV…IGSRRSSAPR (87 aa). Residues 87–173 are domain II; that stretch reads RAAPNAPVSA…QVEGALKHTS (87 aa). The tract at residues 140–160 is disordered; sequence DSFDAMAEPASAPASSGRAEQ. The span at 144–157 shows a compositional bias: low complexity; the sequence is AMAEPASAPASSGR. The domain III, AAA+ region stretch occupies residues 174–390; sequence YLNRTFTFDT…GALKRVIAHS (217 aa). ATP-binding residues include Gly-218, Gly-220, Lys-221, and Thr-222. Residues 391-510 are domain IV, binds dsDNA; the sequence is HFMGRDITIE…YKNLLRTLTT (120 aa).

The protein belongs to the DnaA family. In terms of assembly, oligomerizes as a right-handed, spiral filament on DNA at oriC.

Its subcellular location is the cytoplasm. Functionally, plays an essential role in the initiation and regulation of chromosomal replication. ATP-DnaA binds to the origin of replication (oriC) to initiate formation of the DNA replication initiation complex once per cell cycle. Binds the DnaA box (a 9 base pair repeat at the origin) and separates the double-stranded (ds)DNA. Forms a right-handed helical filament on oriC DNA; dsDNA binds to the exterior of the filament while single-stranded (ss)DNA is stabiized in the filament's interior. The ATP-DnaA-oriC complex binds and stabilizes one strand of the AT-rich DNA unwinding element (DUE), permitting loading of DNA polymerase. After initiation quickly degrades to an ADP-DnaA complex that is not apt for DNA replication. Binds acidic phospholipids. The chain is Chromosomal replication initiator protein DnaA from Pseudomonas putida (strain GB-1).